The primary structure comprises 204 residues: Neurensin-2 (204 aa).

2 consecutive transmembrane segments (helical) span residues 66–86 and 122–142; these read LSSGTLLLLLGVAALTTGYAV and LCVAAGVLLAICLFWAMIGWL. The disordered stretch occupies residues 178–204; it reads SGQSWFSPPASPFGQSSVQTIQPKRDS. Over residues 190–204 the composition is skewed to polar residues; that stretch reads FGQSSVQTIQPKRDS.

Belongs to the VMP family.

The protein localises to the membrane. Its function is as follows. May play a role in maintenance and/or transport of vesicles. The polypeptide is Neurensin-2 (NRSN2) (Homo sapiens (Human)).